The primary structure comprises 189 residues: Chitin synthase 1 (189 aa).

Belongs to the chitin synthase family. Class I subfamily.

The protein localises to the cell membrane. It catalyses the reaction [(1-&gt;4)-N-acetyl-beta-D-glucosaminyl](n) + UDP-N-acetyl-alpha-D-glucosamine = [(1-&gt;4)-N-acetyl-beta-D-glucosaminyl](n+1) + UDP + H(+). Polymerizes chitin, a structural polymer of the cell wall and septum, by transferring the sugar moiety of UDP-GlcNAc to the non-reducing end of the growing chitin polymer. The chain is Chitin synthase 1 (chs1) from Botryotinia fuckeliana (Noble rot fungus).